We begin with the raw amino-acid sequence, 860 residues long: MQEQYRPEEIESKVQLHWDEKRTFEVTEDESKEKYYCLSMLPYPSGRLHMGHVRNYTIGDVIARYQRMLGKNVLQPIGWDAFGLPAEGAAVKNNTAPAPWTYDNIAYMKNQLKMLGFGYDWSRELATCTPEYYRWEQKFFTELYKKGLVYKKTSAVNWCPNDQTVLANEQVIDGCCWRCDTKVERKEIPQWFIKITAYADELLNNLDKLDHWPDTVKTMQRNWIGRSEGVEITFNVNDYDNTLTVYTTRPDTFMGCTYLAVAAGHPLAQKAAENNPELAAFIDECRNTKVAEAEMATMEKKGVDTGFKAVHPLTGEEIPVWAANFVLMEYGTGAVMAVPGHDQRDYEFASKYGLNIKPVILAADGSEPDLSQQALTEKGVLFNSGEFNGLDHEAAFNAIADKLTAMGVGERKVNYRLRDWGVSRQRYWGAPIPMVTLEDGTVMPTPDDQLPVILPEDVVMDGITSPIKADPEWAKTTVNGMPALRETDTFDTFMESSWYYARYTCPEYKEGMLDSKAANYWLPVDIYIGGIEHAIMHLLYFRFFHKLMRDAGMVNSDEPAKQLLCQGMVLADAFYYVGENGERNWVSPVDAIVERDEKGRIVKAKDAAGHELVYTGMSKMSKSKNNGIDPQVMVERYGADTVRLFMMFASPADMTLEWQESGVEGANRFLKRVWKLVYEHTAKGDVAALNVDALTEDQKALRRDVHKTIAKVTDDIGRRQTFNTAIAAIMELMNKLAKAPTDGEQDRALMQEALLAVIRMLNPFTPHICFTLWQELKGEGDIDNAPWPVADEKAMVEDSTLVVVQVNGKVRAKITVPVDATEEQVRERAGQEHLVAKYLDGVTVRKVIYVPGKLLNLVVG.

Residues 42 to 52 (PYPSGRLHMGH) carry the 'HIGH' region motif. The 'KMSKS' region signature appears at 619-623 (KMSKS). Lysine 622 is a binding site for ATP.

The protein belongs to the class-I aminoacyl-tRNA synthetase family.

The protein localises to the cytoplasm. It carries out the reaction tRNA(Leu) + L-leucine + ATP = L-leucyl-tRNA(Leu) + AMP + diphosphate. In Escherichia coli O7:K1 (strain IAI39 / ExPEC), this protein is Leucine--tRNA ligase.